Reading from the N-terminus, the 171-residue chain is Crossover junction endodeoxyribonuclease RuvC (171 aa).

Catalysis depends on residues aspartate 12, glutamate 72, and aspartate 144. Aspartate 12, glutamate 72, and aspartate 144 together coordinate Mg(2+).

Belongs to the RuvC family. As to quaternary structure, homodimer which binds Holliday junction (HJ) DNA. The HJ becomes 2-fold symmetrical on binding to RuvC with unstacked arms; it has a different conformation from HJ DNA in complex with RuvA. In the full resolvosome a probable DNA-RuvA(4)-RuvB(12)-RuvC(2) complex forms which resolves the HJ. Requires Mg(2+) as cofactor.

Its subcellular location is the cytoplasm. It carries out the reaction Endonucleolytic cleavage at a junction such as a reciprocal single-stranded crossover between two homologous DNA duplexes (Holliday junction).. In terms of biological role, the RuvA-RuvB-RuvC complex processes Holliday junction (HJ) DNA during genetic recombination and DNA repair. Endonuclease that resolves HJ intermediates. Cleaves cruciform DNA by making single-stranded nicks across the HJ at symmetrical positions within the homologous arms, yielding a 5'-phosphate and a 3'-hydroxyl group; requires a central core of homology in the junction. The consensus cleavage sequence is 5'-(A/T)TT(C/G)-3'. Cleavage occurs on the 3'-side of the TT dinucleotide at the point of strand exchange. HJ branch migration catalyzed by RuvA-RuvB allows RuvC to scan DNA until it finds its consensus sequence, where it cleaves and resolves the cruciform DNA. The protein is Crossover junction endodeoxyribonuclease RuvC of Afipia carboxidovorans (strain ATCC 49405 / DSM 1227 / KCTC 32145 / OM5) (Oligotropha carboxidovorans).